The sequence spans 73 residues: Kappa-scoloptoxin(03)-Ssm1b (73 aa).

The first 23 residues, methionine 1–serine 23, serve as a signal peptide directing secretion. 3 disulfide bridges follow: cysteine 32-cysteine 58, cysteine 41-cysteine 57, and cysteine 44-cysteine 67.

In terms of processing, contains 3 disulfide bonds. Expressed by the venom gland.

Its subcellular location is the secreted. In terms of biological role, inhibits voltage-gated potassium channels. The chain is Kappa-scoloptoxin(03)-Ssm1b from Scolopendra mutilans (Chinese red-headed centipede).